Here is a 366-residue protein sequence, read N- to C-terminus: Histidinol-phosphate aminotransferase 2 (366 aa).

The span at Met1–Gln11 shows a compositional bias: polar residues. The disordered stretch occupies residues Met1 to Gln21. Lys222 bears the N6-(pyridoxal phosphate)lysine mark.

Belongs to the class-II pyridoxal-phosphate-dependent aminotransferase family. Histidinol-phosphate aminotransferase subfamily. In terms of assembly, homodimer. Requires pyridoxal 5'-phosphate as cofactor.

It catalyses the reaction L-histidinol phosphate + 2-oxoglutarate = 3-(imidazol-4-yl)-2-oxopropyl phosphate + L-glutamate. It participates in amino-acid biosynthesis; L-histidine biosynthesis; L-histidine from 5-phospho-alpha-D-ribose 1-diphosphate: step 7/9. The protein is Histidinol-phosphate aminotransferase 2 of Bacillus cereus (strain ATCC 10987 / NRS 248).